The sequence spans 171 residues: uncharacterized protein (171 aa).

This is an uncharacterized protein from Thermofilum pendens.